The following is a 179-amino-acid chain: Cytochrome b6-f complex iron-sulfur subunit 1 (179 aa).

A helical transmembrane segment spans residues 21-43; the sequence is LLTFGTVTGVALGALYPVVNYFI. The 102-residue stretch at 61–162 folds into the Rieske domain; that stretch reads GNDVSVSKFL…AKTENDKIVL (102 aa). 4 residues coordinate [2Fe-2S] cluster: Cys108, His110, Cys126, and His129. A disulfide bridge links Cys113 with Cys128.

The protein belongs to the Rieske iron-sulfur protein family. In terms of assembly, the 4 large subunits of the cytochrome b6-f complex are cytochrome b6, subunit IV (17 kDa polypeptide, PetD), cytochrome f and the Rieske protein, while the 4 small subunits are PetG, PetL, PetM and PetN. The complex functions as a dimer. The cofactor is [2Fe-2S] cluster.

The protein resides in the cellular thylakoid membrane. The enzyme catalyses 2 oxidized [plastocyanin] + a plastoquinol + 2 H(+)(in) = 2 reduced [plastocyanin] + a plastoquinone + 4 H(+)(out). In terms of biological role, component of the cytochrome b6-f complex, which mediates electron transfer between photosystem II (PSII) and photosystem I (PSI), cyclic electron flow around PSI, and state transitions. The polypeptide is Cytochrome b6-f complex iron-sulfur subunit 1 (Nostoc sp. (strain PCC 7120 / SAG 25.82 / UTEX 2576)).